The chain runs to 286 residues: ATP synthase gamma chain (286 aa).

This sequence belongs to the ATPase gamma chain family. As to quaternary structure, F-type ATPases have 2 components, CF(1) - the catalytic core - and CF(0) - the membrane proton channel. CF(1) has five subunits: alpha(3), beta(3), gamma(1), delta(1), epsilon(1). CF(0) has three main subunits: a, b and c.

The protein localises to the cell inner membrane. Its function is as follows. Produces ATP from ADP in the presence of a proton gradient across the membrane. The gamma chain is believed to be important in regulating ATPase activity and the flow of protons through the CF(0) complex. The sequence is that of ATP synthase gamma chain from Pseudoalteromonas atlantica (strain T6c / ATCC BAA-1087).